The chain runs to 480 residues: Alpha,alpha-trehalose-phosphate synthase [UDP-forming] 2 (480 aa).

Positions 97 and 151 each coordinate D-glucose 6-phosphate. UDP-binding residues include Arg288 and Lys293. Residues Arg288 and Lys293 each coordinate UDP-alpha-D-glucose. Arg326 is a binding site for D-glucose 6-phosphate. Residue 387–395 (DGMNLVSFE) coordinates UDP-alpha-D-glucose. 391-395 (LVSFE) provides a ligand contact to UDP.

The protein belongs to the glycosyltransferase 20 family.

It catalyses the reaction D-glucose 6-phosphate + UDP-alpha-D-glucose = alpha,alpha-trehalose 6-phosphate + UDP + H(+). Its pathway is carbohydrate biosynthesis. In terms of biological role, synthase catalytic subunit of the trehalose synthase complex that catalyzes the production of trehalose from glucose-6-phosphate and UDP-alpha-D-glucose in a two step process. This chain is Alpha,alpha-trehalose-phosphate synthase [UDP-forming] 2, found in Aspergillus niger.